The primary structure comprises 301 residues: 33 kDa chaperonin (301 aa).

Cystine bridges form between Cys239–Cys241 and Cys272–Cys275.

Belongs to the HSP33 family. Post-translationally, under oxidizing conditions two disulfide bonds are formed involving the reactive cysteines. Under reducing conditions zinc is bound to the reactive cysteines and the protein is inactive.

Its subcellular location is the cytoplasm. Redox regulated molecular chaperone. Protects both thermally unfolding and oxidatively damaged proteins from irreversible aggregation. Plays an important role in the bacterial defense system toward oxidative stress. In Nostoc sp. (strain PCC 7120 / SAG 25.82 / UTEX 2576), this protein is 33 kDa chaperonin.